The chain runs to 100 residues: UPF0213 protein CKO_04549 (100 aa).

One can recognise a GIY-YIG domain in the interval 2-77; that stretch reads TPWYLYLIRT…KRLTKRQKER (76 aa).

Belongs to the UPF0213 family.

The sequence is that of UPF0213 protein CKO_04549 from Citrobacter koseri (strain ATCC BAA-895 / CDC 4225-83 / SGSC4696).